We begin with the raw amino-acid sequence, 311 residues long: Cytosolic Fe-S cluster assembly factor Nubp1 homolog (311 aa).

The tract at residues 1 to 21 (MQAPPPEHCPGVESEDAGKGS) is disordered. Residues C9, C23, C26, and C32 each coordinate [4Fe-4S] cluster. 63 to 70 (GKGGVGKS) contacts ATP. Positions 240 and 243 each coordinate [4Fe-4S] cluster.

This sequence belongs to the Mrp/NBP35 ATP-binding proteins family. NUBP1/NBP35 subfamily. In terms of assembly, heterotetramer of 2 Nubp1 and 2 Nubp2 chains. It depends on [4Fe-4S] cluster as a cofactor.

It localises to the cytoplasm. Component of the cytosolic iron-sulfur (Fe/S) protein assembly (CIA) machinery. Required for maturation of extramitochondrial Fe-S proteins. The Nubp1-Nubp2 heterotetramer forms a Fe-S scaffold complex, mediating the de novo assembly of an Fe-S cluster and its transfer to target apoproteins. The sequence is that of Cytosolic Fe-S cluster assembly factor Nubp1 homolog from Drosophila sechellia (Fruit fly).